Consider the following 500-residue polypeptide: Glycerol kinase (500 aa).

Thr13 provides a ligand contact to ADP. Thr13, Thr14, and Ser15 together coordinate ATP. Thr13 is a binding site for sn-glycerol 3-phosphate. An ADP-binding site is contributed by Arg17. Sn-glycerol 3-phosphate is bound by residues Arg83, Glu84, Tyr135, and Asp244. Residues Arg83, Glu84, Tyr135, Asp244, and Gln245 each contribute to the glycerol site. Residues Thr266 and Gly309 each coordinate ADP. ATP is bound by residues Thr266, Gly309, Gln313, and Gly410. ADP contacts are provided by Gly410 and Asn414.

The protein belongs to the FGGY kinase family.

The catalysed reaction is glycerol + ATP = sn-glycerol 3-phosphate + ADP + H(+). The protein operates within polyol metabolism; glycerol degradation via glycerol kinase pathway; sn-glycerol 3-phosphate from glycerol: step 1/1. With respect to regulation, inhibited by fructose 1,6-bisphosphate (FBP). Its function is as follows. Key enzyme in the regulation of glycerol uptake and metabolism. Catalyzes the phosphorylation of glycerol to yield sn-glycerol 3-phosphate. The chain is Glycerol kinase from Burkholderia pseudomallei (strain K96243).